The following is a 289-amino-acid chain: 2-hydroxy-6-oxononadienedioate/2-hydroxy-6-oxononatrienedioate hydrolase (289 aa).

The region spanning 39–275 (TVVMLHGSGP…RCGHWAQWEH (237 aa)) is the AB hydrolase-1 domain. H269 serves as the catalytic Proton acceptor.

This sequence belongs to the AB hydrolase superfamily. MhpC family. Homodimer.

The enzyme catalyses (2Z,4E)-2-hydroxy-6-oxonona-2,4-dienedioate + H2O = (2Z)-2-hydroxypenta-2,4-dienoate + succinate + H(+). The catalysed reaction is (2Z,4E,7E)-2-hydroxy-6-oxonona-2,4,7-trienedioate + H2O = (2Z)-2-hydroxypenta-2,4-dienoate + fumarate + H(+). It participates in aromatic compound metabolism; 3-phenylpropanoate degradation. In terms of biological role, catalyzes the cleavage of the C5-C6 bond of 2-hydroxy-6-oxononadienedioate and 2-hydroxy-6-oxononatrienedioate, a dienol ring fission product of the bacterial meta-cleavage pathway for degradation of phenylpropionic acid. This Paraburkholderia xenovorans (strain LB400) protein is 2-hydroxy-6-oxononadienedioate/2-hydroxy-6-oxononatrienedioate hydrolase.